The primary structure comprises 785 residues: Protein kintoun (785 aa).

Basic and acidic residues-rich tracts occupy residues glutamate 622 to serine 638 and histidine 662 to lysine 679. 2 disordered regions span residues glutamate 622–leucine 698 and lysine 719–asparagine 749. Positions threonine 681–aspartate 695 are enriched in polar residues. A compositionally biased stretch (acidic residues) spans serine 728–aspartate 737.

It belongs to the PIH1 family. Kintoun subfamily.

The protein localises to the cytoplasm. It localises to the dynein axonemal particle. In terms of biological role, required for cytoplasmic pre-assembly of axonemal dyneins, thereby playing a central role in motility in cilia and flagella. Involved in pre-assembly of dynein arm complexes in the cytoplasm before intraflagellar transport loads them for the ciliary compartment. This chain is Protein kintoun, found in Xenopus tropicalis (Western clawed frog).